We begin with the raw amino-acid sequence, 142 residues long: ATP synthase epsilon chain (142 aa).

The protein belongs to the ATPase epsilon chain family. In terms of assembly, F-type ATPases have 2 components, CF(1) - the catalytic core - and CF(0) - the membrane proton channel. CF(1) has five subunits: alpha(3), beta(3), gamma(1), delta(1), epsilon(1). CF(0) has three main subunits: a, b and c.

The protein localises to the cell inner membrane. Produces ATP from ADP in the presence of a proton gradient across the membrane. The chain is ATP synthase epsilon chain from Pasteurella multocida (strain Pm70).